The primary structure comprises 109 residues: Flagellar transcriptional regulator FlhD (109 aa).

It belongs to the FlhD family. As to quaternary structure, homodimer; disulfide-linked. Forms a heterohexamer composed of two FlhC and four FlhD subunits. Each FlhC binds a FlhD dimer, forming a heterotrimer, and a hexamer assembles by dimerization of two heterotrimers.

It localises to the cytoplasm. Its function is as follows. Functions in complex with FlhC as a master transcriptional regulator that regulates transcription of several flagellar and non-flagellar operons by binding to their promoter region. Activates expression of class 2 flagellar genes, including fliA, which is a flagellum-specific sigma factor that turns on the class 3 genes. Also regulates genes whose products function in a variety of physiological pathways. In Acidovorax sp. (strain JS42), this protein is Flagellar transcriptional regulator FlhD.